The chain runs to 79 residues: uncharacterized protein (79 aa).

A signal peptide spans 1-33 (MRFIIRTVMLIALVWIGLLLSGYGVLIGSKENA).

This is an uncharacterized protein from Escherichia coli O157:H7.